Consider the following 665-residue polypeptide: MEVSGPEDDPFLSQLHQVQCPVCQQMMPAAHINSHLDRCLLLHPAGHAEPAAGSHRAGERAKGPSPPGAKRRRLSESSALKQPATPTAAESSEGEGEEGDDGGETESRESYDAPPTPSGARLIPDFPVARSSSPGRKGSGKRPAAAAAAGSASPRSWDEAEAQEEEEAVGDGDGDGDADADGEDDPGHWDADAAEAATAFGASGGGRPHPRALAAEEIRQMLQGKPLADTMRPDTLQDYFGQSKAVGQDTLLRSLLETNEIPSLILWGPPGCGKTTLAHIIASNSKKHSIRFVTLSATNAKTNDVRDVIKQAQNEKSFFKRKTILFIDEIHRFNKSQQDTFLPHVECGTITLIGATTENPSFQVNAALLSRCRVIVLEKLPVEAMVTILMRAINSLGIHVLDSSRPTDPLSHSSNSSSEPAMFIEDKAVDTLAYLSDGDARAGLNGLQLAVLARLSSRKMFCKKSGQSYSPSRVLITENDVKEGLQRSHILYDRAGEEHYNCISALHKSMRGSDQNASLYWLARMLEGGEDPLYVARRLVRFASEDIGLADPSALTQAVAAYQGCHFIGMPECEVLLAQCVVYFARAPKSIEVYSAYNNVKACLRNHQGPLPPVPLHLRNAPTRLMKDLGYGKGYKYNPMYSEPVDQEYLPEELRGVDFFKQRRC.

The UBZ4-type zinc finger occupies 17–44 (QVQCPVCQQMMPAAHINSHLDRCLLLHP). Residues C20, C23, H31, H35, and C39 each coordinate Zn(2+). Positions 48-190 (AEPAAGSHRA…DGEDDPGHWD (143 aa)) are disordered. A phosphoserine mark is found at S65 and S75. Residues 76–89 (ESSALKQPATPTAA) are compositionally biased toward polar residues. K81 participates in a covalent cross-link: Glycyl lysine isopeptide (Lys-Gly) (interchain with G-Cter in ubiquitin). T85 is modified (phosphothreonine). 2 positions are modified to phosphoserine: S91 and S92. Residues 92–104 (SEGEGEEGDDGGE) show a composition bias toward acidic residues. Residue T116 is modified to Phosphothreonine. Residues 130-155 (RSSSPGRKGSGKRPAAAAAAGSASPR) show a composition bias toward low complexity. S139 bears the Phosphoserine mark. K141 is covalently cross-linked (Glycyl lysine isopeptide (Lys-Gly) (interchain with G-Cter in ubiquitin)). Residue S153 is modified to Phosphoserine. Acidic residues predominate over residues 159-184 (EAEAQEEEEAVGDGDGDGDADADGED). K225 participates in a covalent cross-link: Glycyl lysine isopeptide (Lys-Gly) (interchain with G-Cter in ubiquitin). Position 270 to 276 (270 to 276 (PGCGKTT)) interacts with ATP. Glycyl lysine isopeptide (Lys-Gly) (interchain with G-Cter in ubiquitin) cross-links involve residues K301, K310, K316, K322, and K335. A Glycyl lysine isopeptide (Lys-Gly) (interchain with G-Cter in SUMO2); alternate cross-link involves residue K482. Residue K482 forms a Glycyl lysine isopeptide (Lys-Gly) (interchain with G-Cter in ubiquitin); alternate linkage. Phosphotyrosine is present on residues Y534 and Y562. Residue K627 forms a Glycyl lysine isopeptide (Lys-Gly) (interchain with G-Cter in ubiquitin) linkage. K633 is covalently cross-linked (Glycyl lysine isopeptide (Lys-Gly) (interchain with G-Cter in ubiquitin); alternate). Residue K633 is modified to N6-acetyllysine; alternate. K636 participates in a covalent cross-link: Glycyl lysine isopeptide (Lys-Gly) (interchain with G-Cter in ubiquitin).

The protein belongs to the AAA ATPase family. RarA/MGS1/WRNIP1 subfamily. In terms of assembly, forms homooligomers, possibly octamers. Directly interacts with POLD1, POLD2 and POLD4. Interacts with the N-terminal domain of WRN. Interacts (via UBZ4-type zinc finger) with monoubiquitin and polyubiquitin. Interacts with TRIM14 and PPP6C; these interactions positively regulate the RIGI signaling pathway. Sumoylated with SUMO1 and SUMO2/3. In terms of tissue distribution, ubiquitously expressed.

It localises to the nucleus. It is found in the cytoplasm. It catalyses the reaction ATP + H2O = ADP + phosphate + H(+). In terms of biological role, functions as a modulator of initiation or reinitiation events during DNA polymerase delta-mediated DNA synthesis. In the presence of ATP, stimulation of DNA polymerase delta-mediated DNA synthesis is decreased. Also plays a role in the innate immune defense against viruses. Stabilizes the RIGI dsRNA interaction and promotes RIGI 'Lys-63'-linked polyubiquitination. In turn, RIGI transmits the signal through mitochondrial MAVS. The sequence is that of ATPase WRNIP1 from Homo sapiens (Human).